We begin with the raw amino-acid sequence, 77 residues long: Acyl carrier protein (77 aa).

Residues 1 to 76 (MENFDKVKDI…DAVKYINSLE (76 aa)) form the Carrier domain. The residue at position 36 (Ser-36) is an O-(pantetheine 4'-phosphoryl)serine.

The protein belongs to the acyl carrier protein (ACP) family. 4'-phosphopantetheine is transferred from CoA to a specific serine of apo-ACP by AcpS. This modification is essential for activity because fatty acids are bound in thioester linkage to the sulfhydryl of the prosthetic group.

The protein resides in the cytoplasm. The protein operates within lipid metabolism; fatty acid biosynthesis. In terms of biological role, carrier of the growing fatty acid chain in fatty acid biosynthesis. The sequence is that of Acyl carrier protein from Staphylococcus epidermidis (strain ATCC 12228 / FDA PCI 1200).